Consider the following 179-residue polypeptide: Large ribosomal subunit protein uL5 (179 aa).

Belongs to the universal ribosomal protein uL5 family. As to quaternary structure, part of the 50S ribosomal subunit; part of the 5S rRNA/L5/L18/L25 subcomplex. Contacts the 5S rRNA and the P site tRNA. Forms a bridge to the 30S subunit in the 70S ribosome.

Functionally, this is one of the proteins that bind and probably mediate the attachment of the 5S RNA into the large ribosomal subunit, where it forms part of the central protuberance. In the 70S ribosome it contacts protein S13 of the 30S subunit (bridge B1b), connecting the 2 subunits; this bridge is implicated in subunit movement. Contacts the P site tRNA; the 5S rRNA and some of its associated proteins might help stabilize positioning of ribosome-bound tRNAs. In Yersinia enterocolitica serotype O:8 / biotype 1B (strain NCTC 13174 / 8081), this protein is Large ribosomal subunit protein uL5.